Consider the following 749-residue polypeptide: Cytosolic phospholipase A2 (749 aa).

Positions Met-1–Ser-178 are phospholipid binding. The residue at position 2 (Ser-2) is a Phosphoserine. The 117-residue stretch at Pro-6 to Phe-122 folds into the C2 domain. Ca(2+)-binding residues include Asp-40, Thr-41, Asp-43, Asn-65, Asp-93, Ala-94, and Asn-95. In terms of domain architecture, PLA2c spans Ser-140–Asn-740. The Nucleophile role is filled by Ser-228. Thr-268 bears the Phosphothreonine mark. A disordered region spans residues Gly-409 to Gln-457. Residues Ser-434, Ser-435, and Ser-437 each carry the phosphoserine modification. Ser-505 is subject to Phosphoserine; by MAPK. Ser-515 carries the phosphoserine modification. A Glycyl lysine isopeptide (Lys-Gly) (interchain with G-Cter in SUMO2) cross-link involves residue Lys-541. Catalysis depends on Asp-549, which acts as the Proton acceptor. A Glycyl lysine isopeptide (Lys-Gly) (interchain with G-Cter in SUMO2) cross-link involves residue Lys-606. A phosphoserine mark is found at Ser-727 and Ser-729.

Interacts with KAT5. Post-translationally, phosphorylated at both Ser-505 and Ser-727 in response to mitogenic stimuli.

The protein localises to the cytoplasm. It is found in the golgi apparatus membrane. The protein resides in the nucleus envelope. The catalysed reaction is a 1,2-diacyl-sn-glycero-3-phosphocholine + H2O = a 1-acyl-sn-glycero-3-phosphocholine + a fatty acid + H(+). It carries out the reaction a 1-O-alkyl-2-acyl-sn-glycero-3-phosphocholine + H2O = a 1-O-alkyl-sn-glycero-3-phosphocholine + a fatty acid + H(+). It catalyses the reaction a 1-acyl-sn-glycero-3-phosphocholine + H2O = sn-glycerol 3-phosphocholine + a fatty acid + H(+). The enzyme catalyses 1-hexadecanoyl-2-(5Z,8Z,11Z,14Z-eicosatetraenoyl)-sn-glycero-3-phosphocholine + H2O = 1-hexadecanoyl-sn-glycero-3-phosphocholine + (5Z,8Z,11Z,14Z)-eicosatetraenoate + H(+). The catalysed reaction is 1,2-di-(5Z,8Z,11Z,14Z-eicosatetraenoyl)-sn-glycero-3-phosphocholine + H2O = 1-(5Z,8Z,11Z,14Z-eicosatetraenoyl)-sn-glycero-3-phosphocholine + (5Z,8Z,11Z,14Z)-eicosatetraenoate + H(+). It carries out the reaction 1-octadecanoyl-2-(5Z,8Z,11Z,14Z-eicosatetraenoyl)-sn-glycero-3-phosphocholine + H2O = 1-octadecanoyl-sn-glycero-3-phosphocholine + (5Z,8Z,11Z,14Z)-eicosatetraenoate + H(+). It catalyses the reaction 1-hexadecanoyl-2-(9Z,12Z-octadecadienoyl)-sn-glycero-3-phosphocholine + H2O = (9Z,12Z)-octadecadienoate + 1-hexadecanoyl-sn-glycero-3-phosphocholine + H(+). The enzyme catalyses 1-octadecanoyl-2-(9Z,12Z,15Z-octadecatrienoyl)-sn-glycero-3-phosphocholine + H2O = (9Z,12Z,15Z)-octadecatrienoate + 1-octadecanoyl-sn-glycero-3-phosphocholine + H(+). The catalysed reaction is 1-(5Z,8Z,11Z,14Z-eicosatetraenoyl)-2-hexadecanoyl-sn-glycero-3-phosphocholine + H2O = 1-(5Z,8Z,11Z,14Z-eicosatetraenoyl)-sn-glycero-3-phosphocholine + hexadecanoate + H(+). It carries out the reaction 1-O-hexadecyl-2-(5Z,8Z,11Z,14Z)-eicosatetraenoyl-sn-glycero-3-phosphocholine + H2O = 1-O-hexadecyl-sn-glycero-3-phosphocholine + (5Z,8Z,11Z,14Z)-eicosatetraenoate + H(+). It catalyses the reaction 1,2-di-(9Z-octadecenoyl)-sn-glycero-3-phospho-(1'-sn-glycerol) + H2O = 1-(9Z-octadecenoyl)-sn-glycero-3-phospho-(1'-sn-glycerol) + (9Z)-octadecenoate + H(+). The enzyme catalyses 1-octadecanoyl-2-(5Z,8Z,11Z,14Z-eicosatetraenoyl)-sn-glycero-3-phosphate + H2O = 1-octadecanoyl-sn-glycero-3-phosphate + (5Z,8Z,11Z,14Z)-eicosatetraenoate + H(+). The catalysed reaction is 1-hexadecanoyl-sn-glycero-3-phosphocholine + H2O = sn-glycerol 3-phosphocholine + hexadecanoate + H(+). It carries out the reaction 2-(prostaglandin E2)-sn-glycero-3-phosphoethanolamine + H2O = sn-glycero-3-phosphoethanolamine + prostaglandin E2 + H(+). It catalyses the reaction 2-[(15S)-hydroxy-(5Z,8Z,11Z,13E)-eicosatetraenoyl]-sn-glycero-3-phosphocholine + H2O = (15S)-hydroxy-(5Z,8Z,11Z,13E)-eicosatetraenoate + sn-glycerol 3-phosphocholine + H(+). The enzyme catalyses 2-[(15R)-hydroxy-(5Z,8Z,11Z,13E)-eicosatetraenoyl]-sn-glycero-3-phosphocholine + H2O = (15R)-hydroxy-(5Z,8Z,11Z,13E)-eicosatetraenoate + sn-glycerol 3-phosphocholine + H(+). The catalysed reaction is 2-(prostaglandin E2)-sn-glycero-3-phosphocholine + H2O = prostaglandin E2 + sn-glycerol 3-phosphocholine + H(+). It carries out the reaction 2-[(11R)-hydroxy-(5Z,8Z,12E,14Z)-eicosatetraenoyl]-sn-glycero-3-phosphocholine + H2O = (11R)-hydroxy-(5Z,8Z,12E,14Z)-eicosatetraenoate + sn-glycerol 3-phosphocholine + H(+). It catalyses the reaction 1-(5Z,8Z,11Z,14Z-eicosatetraenoyl)-2-O-hexadecyl-sn-glycero-3-phosphocholine + H2O = 2-O-hexadecyl-sn-glycero-3-phosphocholine + (5Z,8Z,11Z,14Z)-eicosatetraenoate + H(+). The enzyme catalyses 1-octadecanoyl-2-(5Z,8Z,11Z,14Z-eicosatetraenoyl)-sn-glycero-3-phosphocholine + glycerol = 1-(5Z,8Z,11Z,14Z-eicosatetraenoyl)-glycerol + 1-octadecanoyl-sn-glycero-3-phosphocholine. The catalysed reaction is 1-octadecanoyl-2-(9Z,12Z,15Z-octadecatrienoyl)-sn-glycero-3-phosphocholine + glycerol = 1-(9Z,12Z,15Z-octadecatrienoyl)-glycerol + 1-octadecanoyl-sn-glycero-3-phosphocholine. It participates in membrane lipid metabolism; glycerophospholipid metabolism. The protein operates within lipid metabolism; arachidonate metabolism. It functions in the pathway lipid metabolism; prostaglandin biosynthesis. Its pathway is lipid metabolism; leukotriene B4 biosynthesis. With respect to regulation, activated by cytosolic calcium, which is necessary for binding to membrane lipids. Activated by phosphorylation in response to mitogenic stimuli. Functionally, has primarily calcium-dependent phospholipase and lysophospholipase activities, with a major role in membrane lipid remodeling and biosynthesis of lipid mediators of the inflammatory response. Plays an important role in embryo implantation and parturition through its ability to trigger prostanoid production. Preferentially hydrolyzes the ester bond of the fatty acyl group attached at sn-2 position of phospholipids (phospholipase A2 activity). Selectively hydrolyzes sn-2 arachidonoyl group from membrane phospholipids, providing the precursor for eicosanoid biosynthesis via the cyclooxygenase pathway. In an alternative pathway of eicosanoid biosynthesis, hydrolyzes sn-2 fatty acyl chain of eicosanoid lysophopholipids to release free bioactive eicosanoids. Hydrolyzes the ester bond of the fatty acyl group attached at sn-1 position of phospholipids (phospholipase A1 activity) only if an ether linkage rather than an ester linkage is present at the sn-2 position. This hydrolysis is not stereospecific. Has calcium-independent phospholipase A2 and lysophospholipase activities in the presence of phosphoinositides. Has O-acyltransferase activity. Catalyzes the transfer of fatty acyl chains from phospholipids to a primary hydroxyl group of glycerol (sn-1 or sn-3), potentially contributing to monoacylglycerol synthesis. The sequence is that of Cytosolic phospholipase A2 (PLA2G4A) from Pongo abelii (Sumatran orangutan).